The chain runs to 1347 residues: Spermatogenesis-associated protein 31A7 (1347 aa).

The chain crosses the membrane as a helical span at residues 23–43 (PWVLDIFLTLVFALGFFFLLL). 7 disordered regions span residues 55 to 88 (PSPS…RECP), 106 to 233 (GPHL…RDST), 374 to 397 (QDTT…GPQK), 628 to 658 (DESP…EAQK), 900 to 955 (RGIP…REAV), 1084 to 1161 (VHEE…PSVS), and 1313 to 1335 (KAVS…SHHH). A compositionally biased stretch (basic residues) spans 60 to 82 (GKRKCPVGRRRRPRGRMKNHSLR). The segment covering 165-178 (LASTPSPGPMTTSV) has biased composition (polar residues). Over residues 198–211 (PEPPALFPHPPHTP) the composition is skewed to pro residues. 2 stretches are compositionally biased toward polar residues: residues 631–651 (PGTS…STGE) and 927–948 (LTYS…SSKA). 2 stretches are compositionally biased toward basic and acidic residues: residues 1108–1127 (HKSE…RLEG) and 1137–1146 (RKTEDTHQDE).

This sequence belongs to the SPATA31 family.

The protein localises to the membrane. Functionally, may play a role in spermatogenesis. This is Spermatogenesis-associated protein 31A7 from Homo sapiens (Human).